A 194-amino-acid polypeptide reads, in one-letter code: Mu-like prophage FluMu protein gp37 (194 aa).

To phage Mu protein gp37.

This Haemophilus influenzae (strain ATCC 51907 / DSM 11121 / KW20 / Rd) protein is Mu-like prophage FluMu protein gp37.